Reading from the N-terminus, the 492-residue chain is PHO85 cyclin-8 (492 aa).

Disordered stretches follow at residues 1–32 (MAND…DNDS), 143–163 (SGSG…GTGR), and 223–252 (KVNS…ENES). A compositionally biased stretch (polar residues) spans 8–20 (NKSLINDALTRSM). A compositionally biased stretch (acidic residues) spans 23–32 (FYDDDDDNDS). Ser32 is subject to Phosphoserine.

The protein belongs to the cyclin family. PHO80 subfamily. As to quaternary structure, forms a cyclin-CDK complex with PHO85.

The protein resides in the cytoplasm. It is found in the nucleus. Functionally, cyclin partner of the cyclin-dependent kinase (CDK) PHO85. Together with cyclin PCL10, negatively controls glycogen accumulation under favorable growth conditions. Involved in phosphorylation and negative regulation of glycogen synthase GSY2. Also has minor GLC8 kinase activity. The chain is PHO85 cyclin-8 (PCL8) from Saccharomyces cerevisiae (strain ATCC 204508 / S288c) (Baker's yeast).